Reading from the N-terminus, the 418-residue chain is Putative competence-damage inducible protein (418 aa).

This sequence belongs to the CinA family.

This Streptococcus pneumoniae (strain JJA) protein is Putative competence-damage inducible protein.